A 203-amino-acid polypeptide reads, in one-letter code: tRNA (pseudouridine(54)-N(1))-methyltransferase (203 aa).

The S-adenosyl-L-methionine site is built by Leu125, Gly146, and Cys179.

This sequence belongs to the methyltransferase superfamily. TrmY family. Homodimer.

The protein localises to the cytoplasm. The catalysed reaction is pseudouridine(54) in tRNA + S-adenosyl-L-methionine = N(1)-methylpseudouridine(54) in tRNA + S-adenosyl-L-homocysteine + H(+). Specifically catalyzes the N1-methylation of pseudouridine at position 54 (Psi54) in tRNAs. The sequence is that of tRNA (pseudouridine(54)-N(1))-methyltransferase from Methanopyrus kandleri (strain AV19 / DSM 6324 / JCM 9639 / NBRC 100938).